The primary structure comprises 201 residues: Achaete-scute complex protein T5 (201 aa).

Polar residues predominate over residues methionine 1–valine 10. A disordered region spans residues methionine 1 to arginine 32. Residues proline 24–leucine 90 form the bHLH domain.

In terms of assembly, efficient DNA binding requires dimerization with another bHLH protein. L(1)SC, SC and AC strongly label the presumptive stomatogastric nervous system, while ASE is more prominent in the presumptive procephalic lobe.

Its function is as follows. AS-C proteins are involved in the determination of the neuronal precursors in the peripheral nervous system and the central nervous system. This Drosophila melanogaster (Fruit fly) protein is Achaete-scute complex protein T5 (ac).